Consider the following 36-residue polypeptide: Kappa-isophellitoxin-Tst1a (36 aa).

Residues 2–36 (CENNFSDRECERRKKDCDSSMKFRELSCPKTCGTC) enclose the ShKT domain. Cystine bridges form between C2–C36, C11–C29, and C18–C33.

The protein belongs to the sea anemone type 1 potassium channel toxin family. Type 1a subfamily. In terms of tissue distribution, predominantly expressed in mesenterial filaments (at protein level), a morphological structure that has a functional role in prey killing and digestion. Also expressed in club-tips, tentacles, actinopharynx, body column, mesenterial filaments and pedal disk.

The protein localises to the secreted. It is found in the nematocyst. In terms of biological role, probable toxin with unknown function. Does not inhibit all channels tested. Is not cytotoxic on macrophage. In Telmatactis stephensoni (Sea anemone), this protein is Kappa-isophellitoxin-Tst1a.